The sequence spans 62 residues: Large ribosomal subunit protein uL30 (62 aa).

This sequence belongs to the universal ribosomal protein uL30 family. In terms of assembly, part of the 50S ribosomal subunit.

The sequence is that of Large ribosomal subunit protein uL30 from Geobacillus thermodenitrificans (strain NG80-2).